The following is a 337-amino-acid chain: Methionyl-tRNA formyltransferase (337 aa).

116 to 119 is a binding site for (6S)-5,6,7,8-tetrahydrofolate; that stretch reads SILP.

The protein belongs to the Fmt family.

The catalysed reaction is L-methionyl-tRNA(fMet) + (6R)-10-formyltetrahydrofolate = N-formyl-L-methionyl-tRNA(fMet) + (6S)-5,6,7,8-tetrahydrofolate + H(+). In terms of biological role, attaches a formyl group to the free amino group of methionyl-tRNA(fMet). The formyl group appears to play a dual role in the initiator identity of N-formylmethionyl-tRNA by promoting its recognition by IF2 and preventing the misappropriation of this tRNA by the elongation apparatus. This chain is Methionyl-tRNA formyltransferase, found in Desulfovibrio desulfuricans (strain ATCC 27774 / DSM 6949 / MB).